The primary structure comprises 186 residues: TATA box-binding protein-like 1 (186 aa).

Belongs to the TBP family.

It is found in the cytoplasm. The protein localises to the nucleus. In terms of biological role, part of a specialized transcription system that mediates the transcription of most ribosomal proteins through the 5'-TCT-3' motif which is a core promoter element at these genes. Seems to also mediate the transcription of NF1. Does not bind the TATA box. Members of the TBP family are differentially required to regulate transcription and development during early embryogenesis. This Danio rerio (Zebrafish) protein is TATA box-binding protein-like 1.